Reading from the N-terminus, the 463-residue chain is Formate-nitrite transporter 2 (463 aa).

Residues 1 to 100 (MCSIPPLRLL…VKKTQLRIDR (100 aa)) lie on the Cytoplasmic side of the membrane. A helical membrane pass occupies residues 101–121 (LLLQAFMAGIFVAMAGHCCTV). The Extracellular segment spans residues 122–142 (LAGSYPTDPGDPLAVAKPTQK). A helical transmembrane segment spans residues 143–163 (FIYGALFPVAFICIILTGAEL). Topologically, residues 164–189 (FTGNTMTMLICYFQKRVTMLQLGVNW) are cytoplasmic. Residues 190 to 210 (LGSLAGNWLGALFGAYFLSYL) traverse the membrane as a helical segment. At 211 to 237 (TGALGDEHVRQFLFRTCVNKISYGWGE) the chain is on the extracellular side. The helical transmembrane segment at 238 to 258 (CFLRGVGCNTFVCLAVWAVIA) threads the bilayer. Residues 259-265 (SENVAGK) are Cytoplasmic-facing. A helical membrane pass occupies residues 266-286 (VLVMWFPIVAFCVGGYEHIIA). The Extracellular segment spans residues 287-305 (NMYTLQAGLMAGAPVAILD). The helical transmembrane segment at 306–326 (VIAFNFLPTLLGNIVGGCLLV) threads the bilayer. The Cytoplasmic segment spans residues 327–463 (GAVYAYNFYP…QTAESVAQQV (137 aa)). The disordered stretch occupies residues 424-463 (SGNLSTHARLDLPNRPVEPPSDGLEVTPQSQTAESVAQQV). Residues 450-463 (TPQSQTAESVAQQV) are compositionally biased toward polar residues.

The protein belongs to the FNT transporter (TC 1.A.16) family. In terms of assembly, homopentamer.

It is found in the cell membrane. The catalysed reaction is (S)-lactate(in) + H(+)(in) = (S)-lactate(out) + H(+)(out). It catalyses the reaction formate(in) + H(+)(in) = formate(out) + H(+)(out). The enzyme catalyses pyruvate(out) + H(+)(out) = pyruvate(in) + H(+)(in). It carries out the reaction acetate(out) + H(+)(out) = acetate(in) + H(+)(in). With respect to regulation, inhibited by p-chloromercuribenzene sulfonate (pCMBS). Methyl methanethiosulfonate (MMTS) inhibits L-lactate but not formate transport. Inhibited by the Malaria Box compound MMV007839. Inhibited by BH-296, BH-317, BH-326 and BH-388 compounds. Its function is as follows. Monocarboxylate-proton symporter; active in acidic-to-neutral pH range. Transports L-lactate and formate. The polypeptide is Formate-nitrite transporter 2 (Toxoplasma gondii (strain ATCC 50611 / Me49)).